Here is a 148-residue protein sequence, read N- to C-terminus: Mediator of RNA polymerase II transcription subunit 31 (148 aa).

This sequence belongs to the Mediator complex subunit 31 family. In terms of assembly, component of the Mediator complex.

The protein resides in the nucleus. Component of the Mediator complex, a coactivator involved in the regulated transcription of nearly all RNA polymerase II-dependent genes. Mediator functions as a bridge to convey information from gene-specific regulatory proteins to the basal RNA polymerase II transcription machinery. Mediator is recruited to promoters by direct interactions with regulatory proteins and serves as a scaffold for the assembly of a functional preinitiation complex with RNA polymerase II and the general transcription factors. The polypeptide is Mediator of RNA polymerase II transcription subunit 31 (Taenia solium (Pork tapeworm)).